A 976-amino-acid polypeptide reads, in one-letter code: Serine/threonine-protein kinase CLA4 (976 aa).

Positions 1 to 46 are disordered; that stretch reads MTSIYTSDLKNHRRAPPPPNGAAGSGSGSSSGSGSGSGSGSGSGSL. A compositionally biased stretch (gly residues) spans 23–43; sequence AGSGSGSSSGSGSGSGSGSGS. In terms of domain architecture, PH spans 73-184; the sequence is SKRQSGWVHV…WLDAFTTKCP (112 aa). Residues 207–231 are disordered; that stretch reads LTNGSLNGNSSSSPTSGLSSSSVLT. Residues 237–250 form the CRIB domain; that stretch reads VSGPINFTHKVHVG. 2 disordered regions span residues 298–522 and 559–658; these read GGNS…KIHP and SKKS…QLKK. 2 stretches are compositionally biased toward low complexity: residues 313–332 and 371–411; these read NSKT…AKNN and LNGS…PLNN. Residues 430 to 440 are compositionally biased toward polar residues; that stretch reads SGTSSDTYSNK. Positions 441–455 are enriched in basic and acidic residues; the sequence is NHQDRSGYEQQRQQR. Positions 456–487 are enriched in low complexity; that stretch reads TDSSQQQQQQQKQHQYQQKSQQQQQQPLSSHQ. A compositionally biased stretch (pro residues) spans 496–505; the sequence is QVPPTLPSSG. Low complexity predominate over residues 559–583; that stretch reads SKKSQQQLASKQPSPPSSQQQQQKP. Over residues 622 to 635 the composition is skewed to polar residues; sequence NETSGVSKTPSPTD. The region spanning 685–940 is the Protein kinase domain; sequence FRIVEKAGQG…TDELLEHSFI (256 aa). ATP contacts are provided by residues 691–699 and Lys715; that span reads AGQGASGNV. Asp808 acts as the Proton acceptor in catalysis.

Belongs to the protein kinase superfamily. STE Ser/Thr protein kinase family. STE20 subfamily. As to quaternary structure, interacts (via the CRIB domain) with CDC42.

The catalysed reaction is L-seryl-[protein] + ATP = O-phospho-L-seryl-[protein] + ADP + H(+). The enzyme catalyses L-threonyl-[protein] + ATP = O-phospho-L-threonyl-[protein] + ADP + H(+). Functionally, ser/Thr kinase required for wild-type filamentous growth, chlamydospore formation, and virulence in mouse systemic infection. This is Serine/threonine-protein kinase CLA4 (CLA4) from Candida albicans (strain SC5314 / ATCC MYA-2876) (Yeast).